The sequence spans 439 residues: MRLSRFFLPILKENPKEAEIVSHRLMLRAGMIRQEAAGIYAWLPLGFRVLKKIEQIVREEQDRSGALELLMPTLQLADLWRESGRYDAYGPEMLRIADRHKRELLYGPTNEEMITEIFRAYVKSYKNLPLNLYHIQWKFRDEQRPRFGVMRGREFLMKDAYSFDLNEAAARVAYNKMFVAYLRTFARMGLKAIPMRAETGPIGGDLSHEFIVLAETGESGVFINRDVLDLPVPGEDVDYESDLTPIIKQWTSVYAATEDVHDAARFEQEVPEAKRLNTRGIEVGQIFYFGTKYSEPMKAMVAGPDGVDVPIHGGSYGVGVSRLLGAIIEACHDDAGIKWPEAVAPFRAVVLNLKQGDAAVDAACEKLYAELQAKGVDVLYDDTDQRAGAKFAAADLIGIPWQIMIGPKGLADGKVELKRRSDGSRETMSPADAVARLVG.

This sequence belongs to the class-II aminoacyl-tRNA synthetase family. ProS type 2 subfamily. Homodimer.

Its subcellular location is the cytoplasm. The catalysed reaction is tRNA(Pro) + L-proline + ATP = L-prolyl-tRNA(Pro) + AMP + diphosphate. In terms of biological role, catalyzes the attachment of proline to tRNA(Pro) in a two-step reaction: proline is first activated by ATP to form Pro-AMP and then transferred to the acceptor end of tRNA(Pro). The chain is Proline--tRNA ligase from Bradyrhizobium diazoefficiens (strain JCM 10833 / BCRC 13528 / IAM 13628 / NBRC 14792 / USDA 110).